The primary structure comprises 117 residues: Large ribosomal subunit protein eL34 (117 aa).

Ser12 carries the phosphoserine modification. 2 positions are modified to N6-acetyllysine: Lys36 and Lys43. Lys108 is covalently cross-linked (Glycyl lysine isopeptide (Lys-Gly) (interchain with G-Cter in SUMO2)).

Belongs to the eukaryotic ribosomal protein eL34 family. As to quaternary structure, component of the large ribosomal subunit.

It localises to the cytoplasm. The protein resides in the cytosol. Its subcellular location is the endoplasmic reticulum. In terms of biological role, component of the large ribosomal subunit. The ribosome is a large ribonucleoprotein complex responsible for the synthesis of proteins in the cell. This Mus musculus (Mouse) protein is Large ribosomal subunit protein eL34 (Rpl34).